A 188-amino-acid chain; its full sequence is Mitochondrial import inner membrane translocase subunit Tim23B (188 aa).

2 consecutive transmembrane segments (helical) span residues 73–93 (FELAFFTIGGCCMTGAAFGAM) and 125–145 (ALWANTLGSLALLYSAFGVII).

This sequence belongs to the Tim17/Tim22/Tim23 family.

Its subcellular location is the mitochondrion inner membrane. In terms of biological role, may participate in the translocation of transit peptide-containing proteins across the mitochondrial inner membrane. the PAM complex. The protein is Mitochondrial import inner membrane translocase subunit Tim23B of Homo sapiens (Human).